Consider the following 207-residue polypeptide: Small ribosomal subunit protein uS4 (207 aa).

The interval 31-54 (KSKFETKPGQHGRTSGSRTSDFGL) is disordered. A compositionally biased stretch (polar residues) spans 42 to 52 (GRTSGSRTSDF). Residues 97 to 158 (SRLDNVVYRM…KAKKQLRVTE (62 aa)) enclose the S4 RNA-binding domain.

Belongs to the universal ribosomal protein uS4 family. As to quaternary structure, part of the 30S ribosomal subunit. Contacts protein S5. The interaction surface between S4 and S5 is involved in control of translational fidelity.

One of the primary rRNA binding proteins, it binds directly to 16S rRNA where it nucleates assembly of the body of the 30S subunit. Functionally, with S5 and S12 plays an important role in translational accuracy. This is Small ribosomal subunit protein uS4 from Methylibium petroleiphilum (strain ATCC BAA-1232 / LMG 22953 / PM1).